Consider the following 329-residue polypeptide: uncharacterized protein (329 aa).

The next 7 helical transmembrane spans lie at isoleucine 29–histidine 49, valine 78–glycine 98, lysine 120–valine 140, tryptophan 164–leucine 184, tyrosine 217–isoleucine 237, phenylalanine 260–valine 280, and glycine 299–isoleucine 319.

The protein to M.pneumoniae MPN_129.

It is found in the cell membrane. This is an uncharacterized protein from Mycoplasma pneumoniae (strain ATCC 29342 / M129 / Subtype 1) (Mycoplasmoides pneumoniae).